The following is a 345-amino-acid chain: uncharacterized protein (345 aa).

Disordered regions lie at residues 1–58 and 139–165; these read MPSP…WRGD and KTNS…NSPK. A compositionally biased stretch (basic and acidic residues) spans 27-39; it reads IKGEGSDDGKEKS. Residues 154-165 are compositionally biased toward polar residues; that stretch reads KQGSAESKNSPK.

This sequence belongs to the MG307/MG309/MG338 family.

This is an uncharacterized protein from Mycoplasma pneumoniae (strain ATCC 29342 / M129 / Subtype 1) (Mycoplasmoides pneumoniae).